Consider the following 99-residue polypeptide: Nucleoid-associated protein SSU98_0195 (99 aa).

Belongs to the YbaB/EbfC family. As to quaternary structure, homodimer.

It is found in the cytoplasm. The protein localises to the nucleoid. Functionally, binds to DNA and alters its conformation. May be involved in regulation of gene expression, nucleoid organization and DNA protection. The protein is Nucleoid-associated protein SSU98_0195 of Streptococcus suis (strain 98HAH33).